A 78-amino-acid chain; its full sequence is Putative membrane protein insertion efficiency factor (78 aa).

This sequence belongs to the UPF0161 family.

The protein localises to the cell inner membrane. In terms of biological role, could be involved in insertion of integral membrane proteins into the membrane. This is Putative membrane protein insertion efficiency factor from Roseobacter denitrificans (strain ATCC 33942 / OCh 114) (Erythrobacter sp. (strain OCh 114)).